We begin with the raw amino-acid sequence, 263 residues long: Malonyl-[acyl-carrier protein] O-methyltransferase (263 aa).

Belongs to the methyltransferase superfamily.

It catalyses the reaction malonyl-[ACP] + S-adenosyl-L-methionine = malonyl-[ACP] methyl ester + S-adenosyl-L-homocysteine. It participates in cofactor biosynthesis; biotin biosynthesis. Functionally, converts the free carboxyl group of a malonyl-thioester to its methyl ester by transfer of a methyl group from S-adenosyl-L-methionine (SAM). It allows to synthesize pimeloyl-ACP via the fatty acid synthetic pathway. The polypeptide is Malonyl-[acyl-carrier protein] O-methyltransferase (Chlorobium luteolum (strain DSM 273 / BCRC 81028 / 2530) (Pelodictyon luteolum)).